A 268-amino-acid polypeptide reads, in one-letter code: Fc receptor-like protein 6 (268 aa).

The signal sequence occupies residues Met-1 to Ala-16. Residues Gln-17 to Pro-215 are Extracellular-facing. Residues Pro-114 to Ser-194 enclose the Ig-like C2-type domain. The cysteines at positions 135 and 183 are disulfide-linked. N-linked (GlcNAc...) asparagine glycosylation is found at Asn-180 and Asn-188. Residues Ile-216–Phe-236 form a helical membrane-spanning segment. Topologically, residues Phe-237–Lys-268 are cytoplasmic.

Interacts with class II MHC.

The protein localises to the cell membrane. In terms of biological role, acts as a MHC class II receptor. When stimulated on its own, does not play a role in cytokine production or the release of cytotoxic granules by NK cells and cytotoxic CD8(+) T cells. Does not act as an Fc receptor. The chain is Fc receptor-like protein 6 (Fcrl6) from Mus musculus (Mouse).